Consider the following 391-residue polypeptide: 1-acyl-sn-glycerol-3-phosphate acyltransferase 2 (391 aa).

The helical transmembrane segment at 3 to 23 (MAAAAVIVPLGILFFISGLVV) threads the bilayer. The HXXXXD motif motif lies at 92-97 (HRSDID). The next 2 membrane-spanning stretches (helical) occupy residues 306–326 (LAVV…FLHW) and 334–354 (KGIA…QILI). A disordered region spans residues 358-391 (QSERSTPAKVAPAKPKDKHQSGSSSQTEVEEKQK).

It belongs to the 1-acyl-sn-glycerol-3-phosphate acyltransferase family.

Its subcellular location is the endoplasmic reticulum membrane. It catalyses the reaction a 1-acyl-sn-glycero-3-phosphate + an acyl-CoA = a 1,2-diacyl-sn-glycero-3-phosphate + CoA. The protein operates within phospholipid metabolism; CDP-diacylglycerol biosynthesis; CDP-diacylglycerol from sn-glycerol 3-phosphate: step 2/3. Functionally, converts lysophosphatidic acid (LPA) into phosphatidic acid by incorporating acyl moiety at the 2 position. This Brassica oleracea (Wild cabbage) protein is 1-acyl-sn-glycerol-3-phosphate acyltransferase 2 (LPAT2).